A 491-amino-acid polypeptide reads, in one-letter code: (1S)-1-hydroxy-luvungin A synthase CYP88A37 (491 aa).

Residues 5–25 form a helical membrane-spanning segment; that stretch reads FSWLILALAIFIGTYAFVFGV. C439 serves as a coordination point for heme.

This sequence belongs to the cytochrome P450 family. Heme is required as a cofactor. As to expression, expressed in maturing fruits and in juice vesicles.

The protein localises to the membrane. It carries out the reaction luvungin A + reduced [NADPH--hemoprotein reductase] + O2 = (1S)-1-hydroxy-luvungin A + oxidized [NADPH--hemoprotein reductase] + H2O + H(+). It participates in secondary metabolite biosynthesis; terpenoid biosynthesis. In terms of biological role, monooxygenase involved in the biosynthesis of limonoids triterpene natural products such as limonin, a compound with insecticidal activity responsible for the bitter taste in citrus. Catalyzes the conversion of luvungin A to (1S)-1-hydroxy-luvungin A. This Citrus sinensis (Sweet orange) protein is (1S)-1-hydroxy-luvungin A synthase CYP88A37.